The primary structure comprises 624 residues: E3 ubiquitin-protein ligase RLIM (624 aa).

N-acetylmethionine is present on Met-1. The span at 1-11 (MENSDSNDKGS) shows a compositional bias: basic and acidic residues. Disordered regions lie at residues 1 to 25 (MENS…QMDR), 72 to 251 (KEGP…SQTF), 257 to 276 (NETE…QQIS), 291 to 363 (TRNA…RGGF), and 424 to 522 (SDSE…TFDE). Polar residues predominate over residues 104–132 (SVRQTGNTTRSGQRGNQSWRAVSRTNPNS). Over residues 142–153 (NVNRNNGSQNSE) the composition is skewed to low complexity. Ser-164 carries the phosphoserine modification. Residues 165–188 (GENVENNSQRQVENPRSESTSARP) are compositionally biased toward polar residues. Phosphoserine occurs at positions 195, 228, 230, and 276. The segment covering 214–229 (RSPDHRRTRARAERSR) has biased composition (basic and acidic residues). Over residues 291-315 (TRNASQGAGSSDTAASGESTGSGQR) the composition is skewed to polar residues. Positions 329-339 (RPGEYRQRDSI) are enriched in basic and acidic residues. The segment covering 340–356 (ASRTRSRSQTPNNTVTY) has biased composition (polar residues). Positions 445-454 (GRGGSGGGSS) are enriched in gly residues. Over residues 455 to 507 (SGSSSSSSSSSSSSSSSSSSSSPSSSSGGESSETSSDLFEGSNEGSSSSGSSG) the composition is skewed to low complexity. Residues 570–611 (CSVCITEYTEGNKLRKLPCSHEYHVHCIDRWLSENSTCPICR) form an RING-type zinc finger. The PDZ-binding signature appears at 621-624 (ESVV).

This sequence belongs to the RNF12 family. As to quaternary structure, interacts with LIM/homeobox factors such as LHX3. Interacts with LDB1, LDB2 and SIN3A. Interacts with LIMK1. Interacts (via N-terminus) with TERF1. Interacts (via C-terminus) with ESR1. Expressed in many tissues.

The protein localises to the nucleus. The enzyme catalyses S-ubiquitinyl-[E2 ubiquitin-conjugating enzyme]-L-cysteine + [acceptor protein]-L-lysine = [E2 ubiquitin-conjugating enzyme]-L-cysteine + N(6)-ubiquitinyl-[acceptor protein]-L-lysine.. It functions in the pathway protein modification; protein ubiquitination. Its function is as follows. E3 ubiquitin-protein ligase. Acts as a negative coregulator for LIM homeodomain transcription factors by mediating the ubiquitination and subsequent degradation of LIM cofactors LDB1 and LDB2 and by mediating the recruitment the SIN3a/histone deacetylase corepressor complex. Ubiquitination and degradation of LIM cofactors LDB1 and LDB2 allows DNA-bound LIM homeodomain transcription factors to interact with other protein partners such as RLIM. Plays a role in telomere length-mediated growth suppression by mediating the ubiquitination and degradation of TERF1. By targeting ZFP42 for degradation, acts as an activator of random inactivation of X chromosome in the embryo, a stochastic process in which one X chromosome is inactivated to minimize sex-related dosage differences of X-encoded genes in somatic cells of female placental mammals. The sequence is that of E3 ubiquitin-protein ligase RLIM (RLIM) from Homo sapiens (Human).